The sequence spans 344 residues: Anthranilate phosphoribosyltransferase (344 aa).

Residues Gly-80, 83–84 (GD), Thr-88, 90–93 (NIST), 108–116 (KHGNRSVSS), and Ser-120 contribute to the 5-phospho-alpha-D-ribose 1-diphosphate site. Gly-80 serves as a coordination point for anthranilate. Ser-92 contributes to the Mg(2+) binding site. Asn-111 contributes to the anthranilate binding site. Residue Arg-166 participates in anthranilate binding. Residues Asp-225 and Glu-226 each coordinate Mg(2+).

It belongs to the anthranilate phosphoribosyltransferase family. In terms of assembly, homodimer. Requires Mg(2+) as cofactor.

It catalyses the reaction N-(5-phospho-beta-D-ribosyl)anthranilate + diphosphate = 5-phospho-alpha-D-ribose 1-diphosphate + anthranilate. It participates in amino-acid biosynthesis; L-tryptophan biosynthesis; L-tryptophan from chorismate: step 2/5. In terms of biological role, catalyzes the transfer of the phosphoribosyl group of 5-phosphorylribose-1-pyrophosphate (PRPP) to anthranilate to yield N-(5'-phosphoribosyl)-anthranilate (PRA). The sequence is that of Anthranilate phosphoribosyltransferase from Petrotoga mobilis (strain DSM 10674 / SJ95).